The chain runs to 300 residues: Type II methyltransferase M.Cfr9I (300 aa).

The interval 109-129 (RGYRAPDKKNPARAMAVRPDT) is disordered.

The protein belongs to the N(4)/N(6)-methyltransferase family. N(4) subfamily.

It carries out the reaction a 2'-deoxycytidine in DNA + S-adenosyl-L-methionine = an N(4)-methyl-2'-deoxycytidine in DNA + S-adenosyl-L-homocysteine + H(+). In terms of biological role, a beta subtype methylase, recognizes the double-stranded sequence 5'-CCCGGG-3', methylates C-2 on both strands, and protects the DNA from cleavage by the Cfr9I endonuclease. The chain is Type II methyltransferase M.Cfr9I from Citrobacter freundii.